Here is a 287-residue protein sequence, read N- to C-terminus: Transcription initiation factor IIB 1 (287 aa).

The TFIIB-type zinc-finger motif lies at histidine 3–threonine 31. Zn(2+) contacts are provided by cysteine 7, cysteine 10, cysteine 23, and cysteine 26. Residues glutamate 40–glutamate 53 are compositionally biased toward basic and acidic residues. The disordered stretch occupies residues glutamate 40–arginine 63. Repeat copies occupy residues threonine 111–leucine 194 and glutamate 205–aspartate 286.

Belongs to the TFIIB family.

Stabilizes TBP binding to an archaeal box-A promoter. Also responsible for recruiting RNA polymerase II to the pre-initiation complex (DNA-TBP-TFIIB). The chain is Transcription initiation factor IIB 1 from Halobacterium salinarum (strain ATCC 700922 / JCM 11081 / NRC-1) (Halobacterium halobium).